Consider the following 245-residue polypeptide: Probable transcriptional regulatory protein SUN_1622 (245 aa).

It belongs to the TACO1 family.

It localises to the cytoplasm. This Sulfurovum sp. (strain NBC37-1) protein is Probable transcriptional regulatory protein SUN_1622.